Reading from the N-terminus, the 268-residue chain is Protein atz-1 (268 aa).

Residues 171-243 (VDDANKLTEV…EEGEEDYEEE (73 aa)) adopt a coiled-coil conformation. Residues 229–268 (DLMKEEEGEEDYEEEENYEVEEDFEDEEEYDEEGEEEDYE) are disordered. Residues 231-268 (MKEEEGEEDYEEEENYEVEEDFEDEEEYDEEGEEEDYE) show a composition bias toward acidic residues.

It is found in the nucleus. Functionally, plays a role in meiosis, germline development and oocyte morphogenesis. May play a role in DNA replication. In the germline, involved in the maintenance of transition zone nuclei and in chromosome structure and organization, but not required for mitotic proliferation. This Caenorhabditis elegans protein is Protein atz-1.